We begin with the raw amino-acid sequence, 378 residues long: Putative glutamate--cysteine ligase 2 (378 aa).

This sequence belongs to the glutamate--cysteine ligase type 2 family. YbdK subfamily.

It carries out the reaction L-cysteine + L-glutamate + ATP = gamma-L-glutamyl-L-cysteine + ADP + phosphate + H(+). Its function is as follows. ATP-dependent carboxylate-amine ligase which exhibits weak glutamate--cysteine ligase activity. The sequence is that of Putative glutamate--cysteine ligase 2 from Salinispora tropica (strain ATCC BAA-916 / DSM 44818 / JCM 13857 / NBRC 105044 / CNB-440).